The sequence spans 594 residues: Zinc finger protein 467 (594 aa).

The disordered stretch occupies residues 1-70 (MRETLEALNS…HTEQAEAPCM (70 aa)). Lys97 participates in a covalent cross-link: Glycyl lysine isopeptide (Lys-Gly) (interchain with G-Cter in SUMO2). 12 C2H2-type zinc fingers span residues 160 to 182 (YGCE…QRLH), 188 to 210 (CACP…QRSH), 216 to 238 (FPCS…LRTH), 244 to 266 (YPCA…QKTH), 272 to 294 (FPCT…QRIH), 300 to 322 (YQCT…QRVH), 355 to 377 (FACS…QSLH), 430 to 452 (FFCP…RRVH), 458 to 480 (FACA…SRAH), 486 to 508 (FACA…QAVH), 514 to 536 (HACA…QAIH), and 542 to 564 (FSCP…QRIH). The interval 313-350 (QHLVRHQRVHDAASRTRSSPDIPATPHPPTASLAPSPT) is disordered. Residue Lys368 forms a Glycyl lysine isopeptide (Lys-Gly) (interchain with G-Cter in SUMO2) linkage.

This sequence belongs to the krueppel C2H2-type zinc-finger protein family. In terms of assembly, interacts with STAT3. Enhances STAT3 activity by keeping it in the nucleus.

It localises to the nucleus. Transcription factor that promotes adipocyte differentiation and suppresses osteoblast differentiation in the bone marrow. Enhances the osteoclast-supporting ability of stromal cells. Binds with STAT3 the consensus sequence 5'-CTTCTGGGAAGA-3' of the acute phase response element (APRE). Transactivates several promoters including FOS, OSM and PPARG. Recruits a histone deacetylase complex. The sequence is that of Zinc finger protein 467 (Znf467) from Rattus norvegicus (Rat).